The chain runs to 571 residues: Cytochrome P450 monooxygenase g430 (571 aa).

Residues 8–28 traverse the membrane as a helical segment; that stretch reads GALIWVVTSYILYAIISNFII. Residue cysteine 471 coordinates heme. The tract at residues 552-571 is disordered; that stretch reads CPLPAEAKLPKSRKPIGTAS.

This sequence belongs to the cytochrome P450 family. Requires heme as cofactor.

It localises to the membrane. It functions in the pathway mycotoxin biosynthesis. Functionally, cytochrome P450 monooxygenase; part of the gene cluster that mediates the biosynthesis of 1233A, a natural compound known as an inhibitor of HMG-CoA synthase in the mevalonate pathway and with antibacterial and antifungal activities. The highly reducing polyketide synthase g433 is responsible for the 1233A backbone biosynthesis and the cytochrome P450 monooxygenase g430 catalyzes oxidation of the backbone. This is Cytochrome P450 monooxygenase g430 from Fusarium sp.